Reading from the N-terminus, the 294-residue chain is Acetyl-coenzyme A carboxylase carboxyl transferase subunit beta (294 aa).

The CoA carboxyltransferase N-terminal domain occupies 27 to 294 (LWHKCPSCDA…PSPVALPVTA (268 aa)). 4 residues coordinate Zn(2+): C31, C34, C50, and C53. Residues 31–53 (CPSCDAVLYRPELEKTLDVCPKC) form a C4-type zinc finger.

The protein belongs to the AccD/PCCB family. Acetyl-CoA carboxylase is a heterohexamer composed of biotin carboxyl carrier protein (AccB), biotin carboxylase (AccC) and two subunits each of ACCase subunit alpha (AccA) and ACCase subunit beta (AccD). It depends on Zn(2+) as a cofactor.

It localises to the cytoplasm. It carries out the reaction N(6)-carboxybiotinyl-L-lysyl-[protein] + acetyl-CoA = N(6)-biotinyl-L-lysyl-[protein] + malonyl-CoA. It participates in lipid metabolism; malonyl-CoA biosynthesis; malonyl-CoA from acetyl-CoA: step 1/1. Component of the acetyl coenzyme A carboxylase (ACC) complex. Biotin carboxylase (BC) catalyzes the carboxylation of biotin on its carrier protein (BCCP) and then the CO(2) group is transferred by the transcarboxylase to acetyl-CoA to form malonyl-CoA. The polypeptide is Acetyl-coenzyme A carboxylase carboxyl transferase subunit beta (Ectopseudomonas mendocina (strain ymp) (Pseudomonas mendocina)).